Reading from the N-terminus, the 1444-residue chain is DNA polymerase III PolC-type (1444 aa).

An Exonuclease domain is found at 421-577; it reads YVVFDVETTG…ADAEATGYLL (157 aa).

It belongs to the DNA polymerase type-C family. PolC subfamily.

It localises to the cytoplasm. The enzyme catalyses DNA(n) + a 2'-deoxyribonucleoside 5'-triphosphate = DNA(n+1) + diphosphate. Required for replicative DNA synthesis. This DNA polymerase also exhibits 3' to 5' exonuclease activity. This is DNA polymerase III PolC-type from Lacticaseibacillus paracasei (strain ATCC 334 / BCRC 17002 / CCUG 31169 / CIP 107868 / KCTC 3260 / NRRL B-441) (Lactobacillus paracasei).